The primary structure comprises 52 residues: Large ribosomal subunit protein bL33 (52 aa).

This sequence belongs to the bacterial ribosomal protein bL33 family.

This is Large ribosomal subunit protein bL33 from Campylobacter jejuni subsp. jejuni serotype O:6 (strain 81116 / NCTC 11828).